A 446-amino-acid polypeptide reads, in one-letter code: Scytalone dehydratase-like protein Arp1 (446 aa).

Tyr-323 serves as a coordination point for substrate. Active-site residues include His-358 and His-383. Substrate is bound at residue Asn-404.

This sequence belongs to the scytalone dehydratase family. As to quaternary structure, homotrimer. Each subunit contains an active site, located in the central part of the hydrophobic core of the monomer, which functions independently.

Functionally, scytalone dehydratase-like protein; part of the Pks2 gene cluster that mediates the formation of infectious structures (appressoria), enabling these fungi to kill insects faster. The product of the Pks2 gene cluster is different from the one of Pks1 and has still not been identified. The chain is Scytalone dehydratase-like protein Arp1 from Metarhizium acridum (strain CQMa 102).